Here is a 184-residue protein sequence, read N- to C-terminus: Gremlin-1 (184 aa).

The first 24 residues, 1 to 24 (MNRTAYTVGALLLLLGTLLPAAEG), serve as a signal peptide directing secretion. 2 N-linked (GlcNAc...) asparagine glycosylation sites follow: Asn2 and Asn42. The segment at 24-78 (GKKKGSQGAIPPPDKAQHNDSEQTQSPPQPGSRTRGRGQGRGTAMPGEEVLESSQ) is disordered. 4 disulfides stabilise this stretch: Cys94-Cys144, Cys108-Cys158, Cys118-Cys176, and Cys122-Cys178. In terms of domain architecture, CTCK spans 94 to 184 (CKTQPLKQTI…QCRCISIDLD (91 aa)).

It belongs to the DAN family. As to quaternary structure, homodimer; can also form homooligomers. Interacts with BMP2; can form higher oligomers with BMP2. Interacts with SLIT1 and SLIT2 in a glycosylation-dependent manner. Highly expressed in the brain, kidney, spleen, and testis and weakly expressed in the lung and liver. Predominantly expressed in differentiated cells as neurons in brain, type I cells in lung and globlet cells in intestine.

It localises to the secreted. Its function is as follows. Cytokine that may play an important role during carcinogenesis and metanephric kidney organogenesis, as a BMP antagonist required for early limb outgrowth and patterning in maintaining the FGF4-SHH feedback loop. Down-regulates the BMP4 signaling in a dose-dependent manner. Antagonist of BMP2; inhibits BMP2-mediated differentiation of osteoblasts (in vitro). Acts as inhibitor of monocyte chemotaxis. Can inhibit the growth or viability of normal cells but not transformed cells when is overexpressed. This Rattus norvegicus (Rat) protein is Gremlin-1 (Grem1).